Consider the following 396-residue polypeptide: Methionine import ATP-binding protein MetN 2 (396 aa).

The region spanning 41 to 280 (VSFELVGKVF…PRHGATRALL (240 aa)) is the ABC transporter domain. 77 to 84 (GRSGAGKS) contributes to the ATP binding site.

This sequence belongs to the ABC transporter superfamily. Methionine importer (TC 3.A.1.24) family. The complex is composed of two ATP-binding proteins (MetN), two transmembrane proteins (MetI) and a solute-binding protein (MetQ).

It is found in the cell inner membrane. It catalyses the reaction L-methionine(out) + ATP + H2O = L-methionine(in) + ADP + phosphate + H(+). The catalysed reaction is D-methionine(out) + ATP + H2O = D-methionine(in) + ADP + phosphate + H(+). In terms of biological role, part of the ABC transporter complex MetNIQ involved in methionine import. Responsible for energy coupling to the transport system. The polypeptide is Methionine import ATP-binding protein MetN 2 (Burkholderia pseudomallei (strain K96243)).